The primary structure comprises 326 residues: Zinc finger protein 830 (326 aa).

Residues 1-11 show a composition bias toward basic residues; it reads MAASRKGKAVK. Positions 1 to 37 are disordered; sequence MAASRKGKAVKAVKQEDLRRLMQETRRDSGRQKRVES. Residues 13–36 are compositionally biased toward basic and acidic residues; sequence VKQEDLRRLMQETRRDSGRQKRVE. Residues 50–72 form a C2H2-type zinc finger; sequence CALCDAPVKNALLWQTHVLGKQH. Residues 83–108 show a composition bias toward low complexity; that stretch reads TAPAHTPAPAHTPAHTPAAASSSSST. 3 disordered regions span residues 83-214, 237-257, and 276-309; these read TAPA…PVRD, EMRQVNSASDAIVAEDDEEGR, and EELRAKQETARSRRRSQRREEEPMQEEEPLEEEE. The segment covering 180-195 has biased composition (polar residues); sequence HSGSVSKAEQQESQEP. Positions 224–295 form a coiled coil; the sequence is KDQLEREWEE…RSRRRSQRRE (72 aa). Residues 276 to 286 are compositionally biased toward basic and acidic residues; it reads EELRAKQETAR. Residues 298–309 are compositionally biased toward acidic residues; sequence PMQEEEPLEEEE.

The protein localises to the nucleus. The protein resides in the chromosome. Its subcellular location is the nucleus speckle. Its function is as follows. May act as an important regulator of the cell cycle that participates in the maintenance of genome integrity. This chain is Zinc finger protein 830, found in Danio rerio (Zebrafish).